Here is a 275-residue protein sequence, read N- to C-terminus: Thioredoxin-like 1-1, chloroplastic (275 aa).

The N-terminal 72 residues, 1–72 (MTEVISKTSL…GDSQDESFRR (72 aa)), are a transit peptide targeting the chloroplast. The 134-residue stretch at 73-206 (SSAITAQTTL…FRDALAKHGP (134 aa)) folds into the Thioredoxin domain. Active-site nucleophile residues include C129 and C132. A disulfide bridge connects residues C129 and C132. The disordered stretch occupies residues 238-275 (KPVPVEKEAATPDSNPSLPVPLPSMSSNDEKTLVSAGR). Over residues 249 to 264 (PDSNPSLPVPLPSMSS) the composition is skewed to low complexity.

The protein belongs to the thioredoxin family.

The protein localises to the plastid. Its subcellular location is the chloroplast. Functionally, thiol-disulfide oxidoreductase that may participate in various redox reactions. Possesses insulin disulfide bonds reducing activity. The sequence is that of Thioredoxin-like 1-1, chloroplastic from Arabidopsis thaliana (Mouse-ear cress).